Reading from the N-terminus, the 1173-residue chain is Pleckstrin homology domain-containing family A member 6 (1173 aa).

Residues 1–22 (MSNKTGGKRSATINSDIANHNM) are compositionally biased toward polar residues. The tract at residues 1–39 (MSNKTGGKRSATINSDIANHNMVSEVPPERPNIRATRTS) is disordered. Residues 59-158 (PVTKAGWLYK…WIQAMGEAAR (100 aa)) form the PH domain. Residues 163 to 346 (PAQKSVPQPV…PSRFYPMPRR (184 aa)) are disordered. Residues 201–233 (LEPEAKTRGEGDGRGCEKAERRPERPEVKKETL) are compositionally biased toward basic and acidic residues. A phosphoserine mark is found at S247 and S251. Polar residues-rich tracts occupy residues 270 to 281 (NGWQYSSPSRPG) and 311 to 322 (RKSSMNQLQQWV). Phosphoserine is present on residues S314, S459, S461, and S472. Y492 is modified (phosphotyrosine). S665 is subject to Phosphoserine. 2 disordered regions span residues 737 to 872 (RKNN…PRDI) and 888 to 984 (ALNK…RPAY). Low complexity-rich tracts occupy residues 761 to 782 (SSNS…SPFS) and 789 to 799 (GSPTKPGSSEE). Positions 815–824 (ESPPTVPPLP) are enriched in pro residues. At S864 the chain carries Phosphoserine. The residue at position 868 (T868) is a Phosphothreonine. S901 carries the post-translational modification Phosphoserine. T908 carries the phosphothreonine modification. Residues 915 to 926 (RTTNGLTNGLSS) are compositionally biased toward polar residues. A Phosphoserine modification is found at S925. Residues 940–952 (GKVKMSVEEQMDR) are compositionally biased toward basic and acidic residues. The segment covering 953-967 (MRRHQSGSMKEKRRS) has biased composition (basic residues). Residues S973, S979, and S992 each carry the phosphoserine modification. T1045 is modified (phosphothreonine). At S1065 the chain carries Phosphoserine. Disordered regions lie at residues 1093-1114 (PIGE…QEQE) and 1130-1173 (RGRM…TMRV). T1140 carries the post-translational modification Phosphothreonine. A compositionally biased stretch (pro residues) spans 1141-1155 (PSPPTSPASPTPPVN). Residue S1142 is modified to Phosphoserine. Residue T1145 is modified to Phosphothreonine. S1146 and S1149 each carry phosphoserine. Position 1151 is a phosphothreonine (T1151).

The chain is Pleckstrin homology domain-containing family A member 6 (Plekha6) from Mus musculus (Mouse).